A 104-amino-acid chain; its full sequence is Ubiquitin-related modifier 1 homolog (104 aa).

Position 104 is a 1-thioglycine (glycine 104). Residue glycine 104 forms a Glycyl lysine isopeptide (Gly-Lys) (interchain with K-? in acceptor proteins) linkage.

This sequence belongs to the URM1 family. In terms of assembly, interacts with cer. Post-translationally, C-terminal thiocarboxylation occurs in 2 steps, it is first acyl-adenylated (-COAMP) via the hesA/moeB/thiF part of the MOCS3 homolog, then thiocarboxylated (-COSH) via the rhodanese domain of the MOCS3 homolog.

It localises to the cytoplasm. Its pathway is tRNA modification; 5-methoxycarbonylmethyl-2-thiouridine-tRNA biosynthesis. In terms of biological role, acts as a sulfur carrier required for 2-thiolation of mcm(5)S(2)U at tRNA wobble positions of cytosolic tRNA(Lys), tRNA(Glu) and tRNA(Gln). Serves as sulfur donor in tRNA 2-thiolation reaction by being thiocarboxylated (-COSH) at its C-terminus by MOCS3. The sulfur is then transferred to tRNA to form 2-thiolation of mcm(5)S(2)U. Also acts as a ubiquitin-like protein (UBL) that is covalently conjugated via an isopeptide bond to lysine residues of target proteins such as Prx2/Jafrac1, Ciao1, Eip71CD and GILT1. The thiocarboxylated form serves as substrate for conjugation and oxidative stress specifically induces the formation of UBL-protein conjugates. The chain is Ubiquitin-related modifier 1 homolog from Drosophila grimshawi (Hawaiian fruit fly).